The chain runs to 372 residues: MFVSDNNNPSRDINMMIGDVTSNGDLQPHQIILGESSGGEDHEIIKAPKKRAETWAQDETRTLISLRREMDNLFNTSKSNKHLWEQISKKMREKGFDRSPSMCTDKWRNILKEFKKAKQHEDKATSGGSTKMSYYNEIEDIFRERKKKVAFYKSPATTTPSSAKVDSFMQFTDKGFEDTGISFTSVEANGRPTLNLETELDHDGLPLPIAADPITANGVPPWNWRDTPGNGVDGQPFAGRIITVKFGDYTRRVGIDGTAEAIKEAIRSAFRLRTRRAFWLEDEEQVIRSLDRDMPLGNYILRIDEGIAVRVCHYDESDPLPVHQEEKIFYTEEDYRDFLARRGWTCLREFDAFQNIDNMDELQSGRLYRGMR.

A Myb-like domain is found at 47–111; that stretch reads APKKRAETWA…MCTDKWRNIL (65 aa). Ser-167 carries the post-translational modification Phosphoserine.

It is found in the nucleus. In terms of biological role, probable transcription factor that binds specific DNA sequence. This is Trihelix transcription factor GT-4 (GT-4) from Arabidopsis thaliana (Mouse-ear cress).